A 563-amino-acid polypeptide reads, in one-letter code: Arylsulfatase K (563 aa).

Positions 1 to 17 are cleaved as a signal peptide; that stretch reads MLLLLVSVIVALALVAP. Ca(2+)-binding residues include D40 and C80. C80 acts as the Nucleophile in catalysis. C80 bears the 3-oxoalanine (Cys) mark. Residue N108 is glycosylated (N-linked (GlcNAc...) asparagine). K128 provides a ligand contact to substrate. An N-linked (GlcNAc...) asparagine glycan is attached at N191. H249 contacts substrate. N-linked (GlcNAc...) asparagine glycosylation is present at N260. Residues D311 and H312 each contribute to the Ca(2+) site. N-linked (GlcNAc...) asparagine glycans are attached at residues N373, N411, and N496.

This sequence belongs to the sulfatase family. Requires Ca(2+) as cofactor. The conversion to 3-oxoalanine (also known as C-formylglycine, FGly), of a serine or cysteine residue in prokaryotes and of a cysteine residue in eukaryotes, is critical for catalytic activity. Post-translationally, the 75-kDa precursor undergoes proteolytic processing to yield a 23 kDa form. In terms of processing, N-glycosylated with both high mannose and complex type sugars.

It is found in the secreted. The protein resides in the lysosome. The enzyme catalyses an aryl sulfate + H2O = a phenol + sulfate + H(+). It catalyses the reaction Hydrolysis of the 2-sulfate groups of the 2-O-sulfo-D-glucuronate residues of chondroitin sulfate, heparin and heparitin sulfate.. Functionally, catalyzes the hydrolysis of pseudosubstrates such as p-nitrocatechol sulfate and p-nitrophenyl sulfate. Catalyzes the hydrolysis of the 2-sulfate groups of the 2-O-sulfo-D-glucuronate residues of chondroitin sulfate, heparin and heparitin sulfate. Acts selectively on 2-sulfoglucuronate and lacks activity against 2-sulfoiduronate. The protein is Arylsulfatase K (Arsk) of Rattus norvegicus (Rat).